A 429-amino-acid chain; its full sequence is MRKFDKSIAAFEEAQDLMPGGVNSPVRAFKSVGMNPLFMERGKGSKVYDIDGNEYIDYVLSWGPLIHGHANDRVVEALKAVAERGTSFGAPTEIENKLAKLVIERVPSIEIVRMVNSGTEATMSALRLARGYTGRNKILKFIGCYHGHGDSLLIKAGSGVATLGLPDSPGVPEGVAKNTITVAYNDLESVKYAFEQFGDDIACVIVEPVAGNMGVVPPQPGFLEGLREVTEQNGALLIFDEVMTGFRVAYNCGQGYYGVTPDLTCLGKVIGGGLPVGAYGGKAEIMRQVAPSGPIYQAGTLSGNPLAMAAGYETLVQLTPESYVEFERKAEMLEAGLRKAAEKHGIPHHINRAGSMIGIFFTDEPVINYDAAKSSNLQFFAAYYREMVEQGVFLPPSQFEGLFLSTVHSDADIEATIAAAEIAMSKLKA.

N6-(pyridoxal phosphate)lysine is present on Lys-268.

The protein belongs to the class-III pyridoxal-phosphate-dependent aminotransferase family. HemL subfamily. As to quaternary structure, homodimer. It depends on pyridoxal 5'-phosphate as a cofactor.

Its subcellular location is the cytoplasm. The catalysed reaction is (S)-4-amino-5-oxopentanoate = 5-aminolevulinate. The protein operates within porphyrin-containing compound metabolism; protoporphyrin-IX biosynthesis; 5-aminolevulinate from L-glutamyl-tRNA(Glu): step 2/2. The sequence is that of Glutamate-1-semialdehyde 2,1-aminomutase 2 from Bacillus anthracis (strain A0248).